The chain runs to 304 residues: Taste receptor type 2 member 4 (304 aa).

The Extracellular segment spans residues M1–F10. Residues A11–I31 traverse the membrane as a helical segment. The Cytoplasmic segment spans residues S32 to K46. Residues I47–V67 form a helical membrane-spanning segment. Residues Y68 to S80 are Extracellular-facing. Residues T81 to L101 traverse the membrane as a helical segment. At N102–T128 the chain is on the cytoplasmic side. Residues T129–L149 traverse the membrane as a helical segment. The Extracellular portion of the chain corresponds to T150–D171. N163 carries an N-linked (GlcNAc...) asparagine glycan. A helical transmembrane segment spans residues G172 to V192. Residues T193–R229 lie on the Cytoplasmic side of the membrane. Residues L230–P250 traverse the membrane as a helical segment. Residues S251 to Q260 lie on the Extracellular side of the membrane. A helical transmembrane segment spans residues A261–T281. Topologically, residues H282–N304 are cytoplasmic.

The protein belongs to the G-protein coupled receptor T2R family. In terms of tissue distribution, expressed in tongue, stomach and duodenum.

The protein localises to the membrane. Its subcellular location is the cell projection. It is found in the cilium membrane. In terms of biological role, gustducin-coupled receptor implicated in the perception of bitter compounds in the oral cavity and the gastrointestinal tract. Signals through PLCB2 and the calcium-regulated cation channel TRPM5. In airway epithelial cells, binding of denatonium increases the intracellular calcium ion concentration and stimulates ciliary beat frequency. This chain is Taste receptor type 2 member 4, found in Rattus norvegicus (Rat).